The sequence spans 97 residues: Exodeoxyribonuclease 7 small subunit (97 aa).

The interval 1 to 22 (MAKTASPGATPPGNGTEPLPDN) is disordered.

The protein belongs to the XseB family. Heterooligomer composed of large and small subunits.

It is found in the cytoplasm. The enzyme catalyses Exonucleolytic cleavage in either 5'- to 3'- or 3'- to 5'-direction to yield nucleoside 5'-phosphates.. Functionally, bidirectionally degrades single-stranded DNA into large acid-insoluble oligonucleotides, which are then degraded further into small acid-soluble oligonucleotides. This is Exodeoxyribonuclease 7 small subunit from Burkholderia cenocepacia (strain HI2424).